Here is a 602-residue protein sequence, read N- to C-terminus: Elongation factor 4 (602 aa).

A tr-type G domain is found at 7-189 (NNIRNFSIIA…RILTAVPPPQ (183 aa)). GTP contacts are provided by residues 19–24 (DHGKST) and 136–139 (NKID).

The protein belongs to the TRAFAC class translation factor GTPase superfamily. Classic translation factor GTPase family. LepA subfamily.

It localises to the cell inner membrane. It carries out the reaction GTP + H2O = GDP + phosphate + H(+). Required for accurate and efficient protein synthesis under certain stress conditions. May act as a fidelity factor of the translation reaction, by catalyzing a one-codon backward translocation of tRNAs on improperly translocated ribosomes. Back-translocation proceeds from a post-translocation (POST) complex to a pre-translocation (PRE) complex, thus giving elongation factor G a second chance to translocate the tRNAs correctly. Binds to ribosomes in a GTP-dependent manner. The polypeptide is Elongation factor 4 (Protochlamydia amoebophila (strain UWE25)).